We begin with the raw amino-acid sequence, 350 residues long: Methylthioribose-1-phosphate isomerase (350 aa).

Residues 48 to 50, R93, and Q198 each bind substrate; that span reads RGA. Residue D239 is the Proton donor of the active site. Substrate is bound at residue 249–250; that stretch reads NK.

Belongs to the eIF-2B alpha/beta/delta subunits family. MtnA subfamily.

The catalysed reaction is 5-(methylsulfanyl)-alpha-D-ribose 1-phosphate = 5-(methylsulfanyl)-D-ribulose 1-phosphate. The protein operates within amino-acid biosynthesis; L-methionine biosynthesis via salvage pathway; L-methionine from S-methyl-5-thio-alpha-D-ribose 1-phosphate: step 1/6. Functionally, catalyzes the interconversion of methylthioribose-1-phosphate (MTR-1-P) into methylthioribulose-1-phosphate (MTRu-1-P). In Fervidobacterium nodosum (strain ATCC 35602 / DSM 5306 / Rt17-B1), this protein is Methylthioribose-1-phosphate isomerase.